A 162-amino-acid polypeptide reads, in one-letter code: Caveolin-2 (162 aa).

The Cytoplasmic portion of the chain corresponds to 1–86; sequence MGLETEKADV…FEISKYVMYK (86 aa). Phosphotyrosine; by SRC is present on Tyr19. A phosphoserine mark is found at Ser20 and Ser23. A Phosphotyrosine; by SRC modification is found at Tyr27. Ser36 is subject to Phosphoserine. An intramembrane region (helical) is located at residues 87 to 107; that stretch reads FLTVFLAIPLAFIAGILFATL. Over 108-162 the chain is Cytoplasmic; sequence SCLHIWILMPFVKTCLMVLPSVQTIWKSVTDVIIAPLCTSVGRSFSSVSLQLSQD.

The protein belongs to the caveolin family. Monomer or homodimer. Interacts with CAV1; the interaction forms a stable heterooligomeric complex that is required for targeting to lipid rafts and for caveolae formation. Tyrosine phosphorylated forms do not form heterooligomers with the Tyr-19-phosphorylated form existing as a monomer or dimer, and the Tyr-27-form as a monomer only. Interacts (tyrosine phosphorylated form) with the SH2 domain-containing proteins, RASA1, NCK1 and SRC. Interacts (tyrosine phosphorylated form) with INSR, the interaction (Tyr-27-phosphorylated form) is increased on insulin stimulation. Interacts (Tyr-19 phosphorylated form) with MAPK1 (phosphorylated form); the interaction, promoted by insulin, leads to nuclear location and MAPK1 activation. Interacts with STAT3; the interaction is increased on insulin-induced tyrosine phosphorylation leading to STAT activation. Phosphorylated on serine and tyrosine residues. CAV1 promotes phosphorylation on Ser-23 which then targets the complex to the plasma membrane, lipid rafts and caveolae. Phosphorylation on Ser-36 appears to modulate mitosis in endothelial cells. Phosphorylation on both Tyr-19 and Tyr-27 is required for insulin-induced 'Ser-727' phosphorylation of STAT3 and its activation. Phosphorylation on Tyr-19 is required for insulin-induced phosphorylation of MAPK1 and DNA binding of STAT3. Tyrosine phosphorylation is induced by both EGF and insulin (By. similarity).

The protein localises to the nucleus. It localises to the cytoplasm. It is found in the golgi apparatus membrane. The protein resides in the cell membrane. Its subcellular location is the membrane. The protein localises to the caveola. Functionally, may act as a scaffolding protein within caveolar membranes. Interacts directly with G-protein alpha subunits and can functionally regulate their activity. Acts as an accessory protein in conjunction with CAV1 in targeting to lipid rafts and driving caveolae formation. The Ser-36 phosphorylated form has a role in modulating mitosis in endothelial cells. Positive regulator of cellular mitogenesis of the MAPK signaling pathway. Required for the insulin-stimulated nuclear translocation and activation of MAPK1 and STAT3, and the subsequent regulation of cell cycle progression. This chain is Caveolin-2 (CAV2), found in Pongo abelii (Sumatran orangutan).